A 340-amino-acid chain; its full sequence is 3-hydroxybenzoate synthase (340 aa).

Substrate is bound by residues Tyr-147, Arg-154, Tyr-207, and Arg-220. The active-site Proton acceptor is the Glu-334.

This sequence belongs to the FkbO/Hyg5 family. In terms of assembly, trimer.

The catalysed reaction is chorismate = 3-hydroxybenzoate + pyruvate. In terms of biological role, involved in the biosynthesis of BC325, a rapamycin analog containing a 3-hydroxybenzoate starter unit. Catalyzes the hydrolysis of chorismate via an intramolecular mechanism to yield 3-hydroxybenzoate (3HBA). This is 3-hydroxybenzoate synthase from Streptomyces hygroscopicus.